Here is a 246-residue protein sequence, read N- to C-terminus: Probable transcriptional regulatory protein YebC (246 aa).

Residues 1-20 are disordered; the sequence is MAGHSKWANTRHRKAAQDAK.

This sequence belongs to the TACO1 family.

It is found in the cytoplasm. The protein is Probable transcriptional regulatory protein YebC of Salmonella choleraesuis (strain SC-B67).